The primary structure comprises 388 residues: N5-carboxyaminoimidazole ribonucleotide synthase (388 aa).

ATP is bound by residues K105, K140, 174–177 (ESFV), E182, and 267–268 (NE). Residues 109–297 (RHFLQNLGLP…QFALQLQAVT (189 aa)) enclose the ATP-grasp domain.

This sequence belongs to the PurK/PurT family. As to quaternary structure, homodimer.

It catalyses the reaction 5-amino-1-(5-phospho-beta-D-ribosyl)imidazole + hydrogencarbonate + ATP = 5-carboxyamino-1-(5-phospho-D-ribosyl)imidazole + ADP + phosphate + 2 H(+). The protein operates within purine metabolism; IMP biosynthesis via de novo pathway; 5-amino-1-(5-phospho-D-ribosyl)imidazole-4-carboxylate from 5-amino-1-(5-phospho-D-ribosyl)imidazole (N5-CAIR route): step 1/2. Functionally, catalyzes the ATP-dependent conversion of 5-aminoimidazole ribonucleotide (AIR) and HCO(3)(-) to N5-carboxyaminoimidazole ribonucleotide (N5-CAIR). In Synechocystis sp. (strain ATCC 27184 / PCC 6803 / Kazusa), this protein is N5-carboxyaminoimidazole ribonucleotide synthase.